Consider the following 1464-residue polypeptide: DNA-directed RNA polymerase subunit beta' (1464 aa).

Zn(2+)-binding residues include C66, C68, C96, and C99. Mg(2+) is bound by residues D491, D493, and D495. Positions 838, 912, 919, and 922 each coordinate Zn(2+). Acidic residues predominate over residues 1143-1200 (NDDDDDDYYDSDYYDYYDYSDDDDDYDDYDDYYYNYDDDENDNDNDYDYDYDYDYDYD). The interval 1143–1229 (NDDDDDDYYD…YDYDYDSDSD (87 aa)) is disordered. Residues 1204 to 1219 (HNSYSHNSYSPSSNDN) are compositionally biased toward low complexity. A compositionally biased stretch (acidic residues) spans 1220–1229 (YDYDYDSDSD).

This sequence belongs to the RNA polymerase beta' chain family. As to quaternary structure, the RNAP catalytic core consists of 2 alpha, 1 beta, 1 beta' and 1 omega subunit. When a sigma factor is associated with the core the holoenzyme is formed, which can initiate transcription. Mg(2+) serves as cofactor. Requires Zn(2+) as cofactor.

It carries out the reaction RNA(n) + a ribonucleoside 5'-triphosphate = RNA(n+1) + diphosphate. Functionally, DNA-dependent RNA polymerase catalyzes the transcription of DNA into RNA using the four ribonucleoside triphosphates as substrates. In Karelsulcia muelleri (strain GWSS) (Sulcia muelleri), this protein is DNA-directed RNA polymerase subunit beta'.